The following is a 96-amino-acid chain: UPF0213 protein BCE33L0031 (96 aa).

The GIY-YIG domain occupies 4–79; it reads NKHCFYVVEC…KQLNRKQKEE (76 aa).

Belongs to the UPF0213 family.

In Bacillus cereus (strain ZK / E33L), this protein is UPF0213 protein BCE33L0031.